The following is a 123-amino-acid chain: Histone H2B 2 (123 aa).

The tract at residues 1–32 (MAPPKPSAKGAKKAAKTVTKPKDGKKRRHARK) is disordered. O-linked (GlcNAc) serine glycosylation occurs at Ser-110. Lys-118 participates in a covalent cross-link: Glycyl lysine isopeptide (Lys-Gly) (interchain with G-Cter in ubiquitin).

Belongs to the histone H2B family. As to quaternary structure, the nucleosome is a histone octamer containing two molecules each of H2A, H2B, H3 and H4 assembled in one H3-H4 heterotetramer and two H2A-H2B heterodimers. The octamer wraps approximately 147 bp of DNA. In terms of processing, monoubiquitination of Lys-118 gives a specific tag for epigenetic transcriptional activation and is also prerequisite for histone H3 'Lys-4' and 'Lys-79' methylation. GlcNAcylation at Ser-110 promotes monoubiquitination of Lys-118. It fluctuates in response to extracellular glucose, and associates with transcribed genes.

The protein localises to the nucleus. The protein resides in the chromosome. In terms of biological role, core component of nucleosome. Nucleosomes wrap and compact DNA into chromatin, limiting DNA accessibility to the cellular machineries which require DNA as a template. Histones thereby play a central role in transcription regulation, DNA repair, DNA replication and chromosomal stability. DNA accessibility is regulated via a complex set of post-translational modifications of histones, also called histone code, and nucleosome remodeling. The polypeptide is Histone H2B 2 (his-4) (Caenorhabditis elegans).